The sequence spans 790 residues: Sodium- and chloride-dependent glycine transporter 2 (790 aa).

Residues 1–39 (MDYVNVVDGSKKTMNSPEGAAPGLIGATGITNPTPDNDL) are disordered. The Cytoplasmic segment spans residues 1–192 (MDYVNVVDGS…ARGNWSNKLD (192 aa)). 3 helical membrane passes run 193–213 (FILS…FPYL), 220–240 (GAFL…IFYL), and 264–284 (GCGI…NIIM). The Na(+) site is built by Gly-199, Ala-201, Val-202, and Asn-206. Over 285–387 (CYTIFYLFAS…GIEYPGEIRW (103 aa)) the chain is Extracellular. Cys-304 and Cys-313 form a disulfide bridge. N-linked (GlcNAc...) asparagine glycosylation is found at Asn-336, Asn-346, Asn-351, and Asn-357. 3 helical membrane-spanning segments follow: residues 388–408 (PLVF…AKGI), 427–447 (VILL…WWFI), and 463–483 (AATQ…TLSS). Na(+) contacts are provided by Ser-470 and Asn-502. A run of 6 helical transmembrane segments spans residues 504-524 (ATSI…AHIL), 556-576 (WAII…FATI), 597-617 (LFTL…ITQG), 631-651 (SYSL…IYGL), 672-692 (ICWA…SFYQ), and 708-728 (MVMG…MFVI). Na(+) is bound by residues Leu-567 and Asp-570. Residues 729-790 (KMFLAPGTFI…PKDFELGTQC (62 aa)) lie on the Cytoplasmic side of the membrane.

This sequence belongs to the sodium:neurotransmitter symporter (SNF) (TC 2.A.22) family. SLC6A5 subfamily. In terms of tissue distribution, first expressed in late neurula stages in the anterior spinal cord, where expression intensifies through the tailbud stages, and by hatching, expression is seen in the hindbrain. During late hatching stages, expression extends along most of the length of the spinal cord, mildly intensifies in the hindbrain, and appears in localized regions of the lateral forebrain and medial midbrain. By the swimming tadpole stage, weak expression appears in the anterior hindbrain, with stronger expression in the posterior, postmitotic neurons.

It is found in the cell membrane. It carries out the reaction glycine(out) + chloride(out) + 3 Na(+)(out) = glycine(in) + chloride(in) + 3 Na(+)(in). Sodium- and chloride-dependent glycine transporter. Terminates the action of glycine by its high affinity sodium-dependent reuptake into presynaptic terminals. May be responsible for the termination of neurotransmission at strychnine-sensitive glycinergic synapses. The protein is Sodium- and chloride-dependent glycine transporter 2 of Xenopus laevis (African clawed frog).